Reading from the N-terminus, the 382-residue chain is V-type proton ATPase subunit C 1 (382 aa).

Residue Thr-2 is modified to N-acetylthreonine.

Belongs to the V-ATPase C subunit family. V-ATPase is a heteromultimeric enzyme made up of two complexes: the ATP-hydrolytic V1 complex and the proton translocation V0 complex. The V1 complex consists of three catalytic AB heterodimers that form a heterohexamer, three peripheral stalks each consisting of EG heterodimers, one central rotor including subunits D and F, and the regulatory subunits C and H. The proton translocation complex V0 consists of the proton transport subunit a, a ring of proteolipid subunits c9c'', rotary subunit d, subunits e and f, and two accessory subunits.

Subunit of the V1 complex of vacuolar(H+)-ATPase (V-ATPase), a multisubunit enzyme composed of a peripheral complex (V1) that hydrolyzes ATP and a membrane integral complex (V0) that translocates protons. V-ATPase is responsible for acidifying and maintaining the pH of intracellular compartments and in some cell types, is targeted to the plasma membrane, where it is responsible for acidifying the extracellular environment. Subunit C is necessary for the assembly of the catalytic sector of the enzyme and is likely to have a specific function in its catalytic activity. The chain is V-type proton ATPase subunit C 1 (atp6v1c1) from Xenopus laevis (African clawed frog).